A 380-amino-acid polypeptide reads, in one-letter code: Chaperone protein DnaJ (380 aa).

One can recognise a J domain in the interval 5-69 (DYYEILGVSK…QKRAHYDQFG (65 aa)). The segment at 135–217 (GKETDIEIPS…CGGTGRVKRR (83 aa)) adopts a CR-type zinc-finger fold. The Zn(2+) site is built by Cys148, Cys151, Cys165, Cys168, Cys191, Cys194, Cys205, and Cys208. CXXCXGXG motif repeat units lie at residues 148–155 (CNTCHGTG), 165–172 (CPHCHGAG), 191–198 (CPYCGGTG), and 205–212 (CTTCGGTG).

The protein belongs to the DnaJ family. As to quaternary structure, homodimer. It depends on Zn(2+) as a cofactor.

The protein localises to the cytoplasm. Its function is as follows. Participates actively in the response to hyperosmotic and heat shock by preventing the aggregation of stress-denatured proteins and by disaggregating proteins, also in an autonomous, DnaK-independent fashion. Unfolded proteins bind initially to DnaJ; upon interaction with the DnaJ-bound protein, DnaK hydrolyzes its bound ATP, resulting in the formation of a stable complex. GrpE releases ADP from DnaK; ATP binding to DnaK triggers the release of the substrate protein, thus completing the reaction cycle. Several rounds of ATP-dependent interactions between DnaJ, DnaK and GrpE are required for fully efficient folding. Also involved, together with DnaK and GrpE, in the DNA replication of plasmids through activation of initiation proteins. The polypeptide is Chaperone protein DnaJ (Geobacillus stearothermophilus (Bacillus stearothermophilus)).